The primary structure comprises 96 residues: Co-chaperonin GroES (96 aa).

The protein belongs to the GroES chaperonin family. As to quaternary structure, heptamer of 7 subunits arranged in a ring. Interacts with the chaperonin GroEL.

The protein resides in the cytoplasm. Its function is as follows. Together with the chaperonin GroEL, plays an essential role in assisting protein folding. The GroEL-GroES system forms a nano-cage that allows encapsulation of the non-native substrate proteins and provides a physical environment optimized to promote and accelerate protein folding. GroES binds to the apical surface of the GroEL ring, thereby capping the opening of the GroEL channel. This is Co-chaperonin GroES from Buchnera aphidicola subsp. Schizaphis graminum (strain Sg).